The sequence spans 387 residues: S-adenosylmethionine synthase (387 aa).

His19 is a binding site for ATP. A Mg(2+)-binding site is contributed by Asp21. Glu47 contributes to the K(+) binding site. Residue Gln103 coordinates L-methionine. A flexible loop region spans residues 103–113 (QSPDIAQGVEL). ATP contacts are provided by residues 167 to 169 (DMK), 233 to 234 (RF), Asp242, 248 to 249 (RK), Ala265, and Lys269. Asp242 serves as a coordination point for L-methionine. Lys273 contacts L-methionine.

Belongs to the AdoMet synthase family. Homotetramer; dimer of dimers. Mg(2+) serves as cofactor. It depends on K(+) as a cofactor.

It is found in the cytoplasm. The enzyme catalyses L-methionine + ATP + H2O = S-adenosyl-L-methionine + phosphate + diphosphate. The protein operates within amino-acid biosynthesis; S-adenosyl-L-methionine biosynthesis; S-adenosyl-L-methionine from L-methionine: step 1/1. In terms of biological role, catalyzes the formation of S-adenosylmethionine (AdoMet) from methionine and ATP. The overall synthetic reaction is composed of two sequential steps, AdoMet formation and the subsequent tripolyphosphate hydrolysis which occurs prior to release of AdoMet from the enzyme. This Mycoplasma mycoides subsp. mycoides SC (strain CCUG 32753 / NCTC 10114 / PG1) protein is S-adenosylmethionine synthase.